A 482-amino-acid chain; its full sequence is Glucose starvation modulator protein 1 (482 aa).

The segment at residues 20 to 48 is a DNA-binding region (zn(2)-C6 fungal-type); the sequence is CVFCHEKHLQCDVGRPCQNCEKRNIGESC. The region spanning 350–422 is the PAS domain; sequence LLEYENMSKM…KLFNEYLAFS (73 aa).

This sequence belongs to the ERT1/acuK family.

Its subcellular location is the nucleus. Transcription factor which regulates nonfermentable carbon utilization. The polypeptide is Glucose starvation modulator protein 1 (GSM1) (Eremothecium gossypii (strain ATCC 10895 / CBS 109.51 / FGSC 9923 / NRRL Y-1056) (Yeast)).